The sequence spans 65 residues: uncharacterized protein (65 aa).

This is an uncharacterized protein from Mycobacterium tuberculosis (strain ATCC 25618 / H37Rv).